Here is a 618-residue protein sequence, read N- to C-terminus: Cationic amino acid transporter 3 (618 aa).

Topologically, residues 1–36 are cytoplasmic; that stretch reads MLWQALRRFGQKLVRRRVLELGMGETRLARCLSTLD. Residues 37–57 traverse the membrane as a helical segment; it reads LVALGVGSTLGAGVYVLAGEV. Residues 58–61 lie on the Extracellular side of the membrane; the sequence is AKDK. A helical membrane pass occupies residues 62 to 82; that stretch reads AGPSIVICFLVAALSSVLAGL. Residues 83-107 lie on the Cytoplasmic side of the membrane; it reads CYAEFGARVPGSGSAYLYSYVTVGE. Residues 108 to 128 form a helical membrane-spanning segment; the sequence is LWAFTTGWNLILSYVIGTASV. Topologically, residues 129–162 are extracellular; it reads ARAWSSAFDNLIGNHISRTLKGTILLKMPHVLAE. A helical transmembrane segment spans residues 163–183; that stretch reads YPDFFALALVLLLTGLLVLGA. Over 184-191 the chain is Cytoplasmic; the sequence is SKSALVTK. A helical transmembrane segment spans residues 192–212; the sequence is VFTGMNLLVLSFVIISGFIKG. At 213 to 244 the chain is on the extracellular side; that stretch reads ELRNWKLTKEDYCLTMSESNGTCSLDSMGSGG. Asparagine 232 is a glycosylation site (N-linked (GlcNAc...) asparagine). The chain crosses the membrane as a helical span at residues 245–265; that stretch reads FMPFGLEGILRGAATCFYAFV. Residues 266-285 lie on the Cytoplasmic side of the membrane; sequence GFDCIATTGEEAQNPQRSIP. A helical transmembrane segment spans residues 286 to 306; it reads MGIVISMFICFLAYFGVSSAL. Over 307 to 335 the chain is Extracellular; it reads TLMMPYYKLHPESPLPEAFSYVGWEPARY. A helical membrane pass occupies residues 336–356; sequence LVAIGSLCALSTSLLGSMFPM. At 357–380 the chain is on the cytoplasmic side; sequence PRVMYSMAEDGLLFRVLAKVHSVT. A helical membrane pass occupies residues 381 to 401; it reads HIPIVATLVSGVIAAFMAFLF. Topologically, residues 402-406 are extracellular; the sequence is ELTDL. A helical membrane pass occupies residues 407 to 427; it reads VDLMSIGTLLAHSLVSICVLI. The Cytoplasmic portion of the chain corresponds to 428–474; it reads LRYQPDQEMKSVEEEMELQEETLEAEKLTVQALFCPVNSIPTLLSGR. Residues 475-495 traverse the membrane as a helical segment; sequence VVYVCSSLLAVLLTVLCLVLT. At 496-506 the chain is on the extracellular side; sequence WWTTPLRSGDP. Residues 507 to 527 traverse the membrane as a helical segment; it reads VWVTVVVLILGLILAISGVIW. Topologically, residues 528-539 are cytoplasmic; that stretch reads RQPQNRTPLHFK. A helical membrane pass occupies residues 540-560; sequence VPAVPLLPLVSIFVNVYLMMQ. Topologically, residues 561–568 are extracellular; that stretch reads MTAGTWAR. The helical transmembrane segment at 569–589 threads the bilayer; sequence FGIWMLIGFAIYFGYGIQHSM. The Cytoplasmic portion of the chain corresponds to 590 to 618; it reads KEVKNHQTLPKTRAQTIDLDLTTSCVHSI. A Phosphothreonine modification is found at threonine 605. Phosphoserine is present on serine 617.

Belongs to the amino acid-polyamine-organocation (APC) superfamily. Cationic amino acid transporter (CAT) (TC 2.A.3.3) family. Post-translationally, N-glycosylated. Expressed in adult brain and in a wide variety of embryonic tissues.

It localises to the cell membrane. It catalyses the reaction L-arginine(in) = L-arginine(out). The catalysed reaction is L-lysine(in) = L-lysine(out). It carries out the reaction L-ornithine(in) = L-ornithine(out). Its function is as follows. Uniporter that mediates the uptake of cationic L-amino acids such as L-arginine, L-lysine and L-ornithine. The transport is sodium ions- and pH-independent, moderately trans-stimulated and is mediated by passive diffusion. In Mus musculus (Mouse), this protein is Cationic amino acid transporter 3.